Here is a 602-residue protein sequence, read N- to C-terminus: Sulfite reductase [NADPH] hemoprotein beta-component (602 aa).

Residues 1–15 are compositionally biased toward basic and acidic residues; the sequence is MDDHKTASPPRERSY. Residues 1 to 24 form a disordered region; the sequence is MDDHKTASPPRERSYETPPAERPI. [4Fe-4S] cluster-binding residues include Cys-458, Cys-464, Cys-503, and Cys-507. Cys-507 provides a ligand contact to siroheme.

This sequence belongs to the nitrite and sulfite reductase 4Fe-4S domain family. Alpha(8)-beta(8). The alpha component is a flavoprotein, the beta component is a hemoprotein. Siroheme is required as a cofactor. Requires [4Fe-4S] cluster as cofactor.

The enzyme catalyses hydrogen sulfide + 3 NADP(+) + 3 H2O = sulfite + 3 NADPH + 4 H(+). It participates in sulfur metabolism; hydrogen sulfide biosynthesis; hydrogen sulfide from sulfite (NADPH route): step 1/1. In terms of biological role, component of the sulfite reductase complex that catalyzes the 6-electron reduction of sulfite to sulfide. This is one of several activities required for the biosynthesis of L-cysteine from sulfate. The polypeptide is Sulfite reductase [NADPH] hemoprotein beta-component (Methylobacterium nodulans (strain LMG 21967 / CNCM I-2342 / ORS 2060)).